A 163-amino-acid chain; its full sequence is Probable cyclic pyranopterin monophosphate synthase (163 aa).

The segment at M1–V23 is disordered. Residues M80–H82 and M116–E117 each bind substrate. D131 is an active-site residue.

This sequence belongs to the MoaC family. Homohexamer; trimer of dimers.

It catalyses the reaction (8S)-3',8-cyclo-7,8-dihydroguanosine 5'-triphosphate = cyclic pyranopterin phosphate + diphosphate. Its pathway is cofactor biosynthesis; molybdopterin biosynthesis. Catalyzes the conversion of (8S)-3',8-cyclo-7,8-dihydroguanosine 5'-triphosphate to cyclic pyranopterin monophosphate (cPMP). This Halobacterium salinarum (strain ATCC 29341 / DSM 671 / R1) protein is Probable cyclic pyranopterin monophosphate synthase.